The following is a 318-amino-acid chain: Methionyl-tRNA formyltransferase (318 aa).

112-115 is a binding site for (6S)-5,6,7,8-tetrahydrofolate; that stretch reads SILP.

The protein belongs to the Fmt family.

It carries out the reaction L-methionyl-tRNA(fMet) + (6R)-10-formyltetrahydrofolate = N-formyl-L-methionyl-tRNA(fMet) + (6S)-5,6,7,8-tetrahydrofolate + H(+). In terms of biological role, attaches a formyl group to the free amino group of methionyl-tRNA(fMet). The formyl group appears to play a dual role in the initiator identity of N-formylmethionyl-tRNA by promoting its recognition by IF2 and preventing the misappropriation of this tRNA by the elongation apparatus. This Haemophilus influenzae (strain ATCC 51907 / DSM 11121 / KW20 / Rd) protein is Methionyl-tRNA formyltransferase.